We begin with the raw amino-acid sequence, 595 residues long: Isoprene synthase, chloroplastic (595 aa).

The N-terminal 37 residues, 1 to 37 (MATELLCLHRPISLTHKLFRNPLPKVIQATPLTLKLR), are a transit peptide targeting the chloroplast. Residue D345 participates in dimethylallyl diphosphate binding. The Mg(2+) site is built by D345 and D349. The DDXXD motif signature appears at 345 to 349 (DDIYD). 3 residues coordinate dimethylallyl diphosphate: E423, R486, and N489. Mg(2+)-binding residues include N489, S493, and E497.

Belongs to the terpene synthase family. Tpsb subfamily. Mg(2+) serves as cofactor. As to expression, predominantly expressed in leaves.

The protein resides in the plastid. The protein localises to the chloroplast. The catalysed reaction is dimethylallyl diphosphate = isoprene + diphosphate. It participates in terpene metabolism. Its function is as follows. Lyase that catalyzes the formation of isoprene from dimethylallyl diphosphate, but not from isopentenyl diphosphate or geranyl diphosphate. This chain is Isoprene synthase, chloroplastic, found in Populus alba (White poplar).